A 349-amino-acid polypeptide reads, in one-letter code: Protein FAM98C (349 aa).

Residues 313 to 349 (PDRGGRPNELEPPMPTWRSRREDGGPQCWGRKKKKKK) are disordered.

It belongs to the FAM98 family.

The protein is Protein FAM98C (FAM98C) of Homo sapiens (Human).